We begin with the raw amino-acid sequence, 622 residues long: 4-hydroxyphenylalkanoate adenylyltransferase (622 aa).

The protein belongs to the ATP-dependent AMP-binding enzyme family.

The catalysed reaction is 17-(4-hydroxyphenyl)heptadecanoate + holo-[(phenol)carboxyphthiodiolenone synthase] + ATP = 17-(4-hydroxyphenyl)heptadecanoyl-[(phenol)carboxyphthiodiolenone synthase] + AMP + diphosphate. It catalyses the reaction 19-(4-hydroxyphenyl)nonadecanoate + holo-[(phenol)carboxyphthiodiolenone synthase] + ATP = 19-(4-hydroxyphenyl)nonadecanoyl-[(phenol)carboxyphthiodiolenone synthase] + AMP + diphosphate. Its pathway is lipid metabolism; fatty acid biosynthesis. Functionally, catalyzes the activation of long-chain fatty acids as acyl-adenylates (acyl-AMP), which are then transferred to the multifunctional polyketide synthase PpsA for further chain extension. Involved in the biosynthesis of phenolphthiocerol, which is an important intermediate in the biosynthesis of phenolic glycolipid (PGL), also called mycosid B. The protein is 4-hydroxyphenylalkanoate adenylyltransferase (fadD29) of Mycobacterium marinum (strain ATCC BAA-535 / M).